Here is a 282-residue protein sequence, read N- to C-terminus: Bifunctional protein FolD (282 aa).

Residues 164-166 (GAS), Ile-189, and Ile-230 each bind NADP(+).

The protein belongs to the tetrahydrofolate dehydrogenase/cyclohydrolase family. As to quaternary structure, homodimer.

It carries out the reaction (6R)-5,10-methylene-5,6,7,8-tetrahydrofolate + NADP(+) = (6R)-5,10-methenyltetrahydrofolate + NADPH. It catalyses the reaction (6R)-5,10-methenyltetrahydrofolate + H2O = (6R)-10-formyltetrahydrofolate + H(+). Its pathway is one-carbon metabolism; tetrahydrofolate interconversion. Catalyzes the oxidation of 5,10-methylenetetrahydrofolate to 5,10-methenyltetrahydrofolate and then the hydrolysis of 5,10-methenyltetrahydrofolate to 10-formyltetrahydrofolate. This Campylobacter jejuni subsp. doylei (strain ATCC BAA-1458 / RM4099 / 269.97) protein is Bifunctional protein FolD.